Consider the following 346-residue polypeptide: Sugar utilization regulatory protein IMP2 (346 aa).

A compositionally biased stretch (polar residues) spans 1 to 29 (MQKSILLTKPDGTQSNLHSIKTETPTTVE). Disordered stretches follow at residues 1–74 (MQKS…RVRE) and 91–132 (LRVV…DIEN). Residue Thr24 is modified to Phosphothreonine. Basic residues predominate over residues 40–49 (RERGRSKKKR). A compositionally biased stretch (acidic residues) spans 96–132 (VDSEEEGEGNDEDDDDGDGDDMDEEESDEEQVSDIEN).

Controls the nucleo-mitochondrial dependence of galactose, maltose and raffinose utilization. Becomes essential in the absence of functioning mitochondria. This chain is Sugar utilization regulatory protein IMP2 (IMP2'), found in Saccharomyces cerevisiae (strain ATCC 204508 / S288c) (Baker's yeast).